We begin with the raw amino-acid sequence, 600 residues long: MVNNMTDLTAQDAAWSTRDHLDDPVIGELRNRFGPDAFTVQATRTGVPVVWVKREQLLEVGDFLKKLPKPYVMLFDLHGMDERLRTHRDGLPAADFSVFYHLISIERNRDIMLKVALSENDLRVPTFTKLFPNANWYERETWEMFGIDIEGHPHLTRIMMPQTWEGHPLRKDYPARATEFDPFELTKAKQDLEMEALTFKPEDWGMKRGTDNEDFMFLNLGPNHPSAHGAFRIILQLDGEEIVDCVPDIGYHHRGAEKMGERQSWHSYIPYTDRIEYLGGCVNEMPYVLAVEKLAGITVPDRVNVIRVMLSELFRINSHLLYISTFIQDVGAMTPVFFAFTDRQKIYDLVEAITGFRMHPAWFRIGGVAHDLPRGWERLLREFLEWMPKRLDSYEKAALRNTILKGRSQGVAAYGAKEALEWGTTGAGLRATGIDFDVRKWRPYSGYENFDFEVPVGGGVSDCYTRVMLKVEELRQSLRILQQCLDNMPEGPFKADHPLTTPPPKERTLQHIETLITHFLQVSWGPVMPAQESFQMVEATKGINSYYLTSDGSTMSYRTRVRTPSFAHLQQIPSAIRGSLVSDLIVYLGSIDFVMSDVDR.

An NADH dehydrogenase I subunit C region spans residues 1-190; that stretch reads MVNNMTDLTA…DPFELTKAKQ (190 aa). An NADH dehydrogenase I subunit D region spans residues 214-600; that stretch reads DFMFLNLGPN…IDFVMSDVDR (387 aa).

This sequence in the N-terminal section; belongs to the complex I 30 kDa subunit family. The protein in the C-terminal section; belongs to the complex I 49 kDa subunit family. As to quaternary structure, NDH-1 is composed of 13 different subunits. Subunits NuoB, CD, E, F, and G constitute the peripheral sector of the complex.

The protein localises to the cell inner membrane. The enzyme catalyses a quinone + NADH + 5 H(+)(in) = a quinol + NAD(+) + 4 H(+)(out). NDH-1 shuttles electrons from NADH, via FMN and iron-sulfur (Fe-S) centers, to quinones in the respiratory chain. The immediate electron acceptor for the enzyme in this species is believed to be ubiquinone. Couples the redox reaction to proton translocation (for every two electrons transferred, four hydrogen ions are translocated across the cytoplasmic membrane), and thus conserves the redox energy in a proton gradient. The protein is NADH-quinone oxidoreductase subunit C/D of Salmonella arizonae (strain ATCC BAA-731 / CDC346-86 / RSK2980).